We begin with the raw amino-acid sequence, 248 residues long: HTH-type transcriptional regulator GgaR (248 aa).

The HTH gntR-type domain maps to 22–90 (TPLYIKFAET…RGYGTQINNI (69 aa)). The segment at residues 50–69 (ERDLSQLTGVSRITVRKAMQ) is a DNA-binding region (H-T-H motif).

Its activity is regulated as follows. Senses ADP-glucose (ADPG), which is the substrate for glycogen elongation, as an effector. In the presence of ADPG, GgaR becomes inactive and derepresses the yegTUV operon, leading to glycogen accumulation. In contrast, in the absence of glucose, the concentration of ADPG decreases, GgaR becomes active, and glycogen accumulation is repressed. Functionally, transcriptional regulator that regulates glycogen accumulation in response to the amount of glucose available to the cell. Acts as a repressor of the yegTUV operon, which may be involved in glycogen accumulation. The protein is HTH-type transcriptional regulator GgaR of Escherichia coli O6:H1 (strain CFT073 / ATCC 700928 / UPEC).